The chain runs to 323 residues: tRNA dimethylallyltransferase (323 aa).

12-19 lines the ATP pocket; the sequence is GPTAAGKT. Position 14–19 (14–19) interacts with substrate; that stretch reads TAAGKT. Interaction with substrate tRNA stretches follow at residues 37-40 and 161-165; these read DSAL and QRLMR.

The protein belongs to the IPP transferase family. As to quaternary structure, monomer. Mg(2+) is required as a cofactor.

The catalysed reaction is adenosine(37) in tRNA + dimethylallyl diphosphate = N(6)-dimethylallyladenosine(37) in tRNA + diphosphate. Functionally, catalyzes the transfer of a dimethylallyl group onto the adenine at position 37 in tRNAs that read codons beginning with uridine, leading to the formation of N6-(dimethylallyl)adenosine (i(6)A). The protein is tRNA dimethylallyltransferase of Pseudomonas aeruginosa (strain LESB58).